The primary structure comprises 204 residues: Small rubber particle protein (204 aa).

Belongs to the REF/SRPP family. Auto-assembles in solution into stable nanomultimers of a globular nature. In terms of processing, not glycosylated. Post-translationally, the N-terminus is blocked. Consistent shifts of about 266 Da observed by MS in various forms of the intact protein suggest the addition of stearolyl groups. Highly expressed in the specialized vessel laticifers, but localized only in the laticifer layers in the conducting phloem. Also detected in leaves.

The protein resides in the cytoplasm. Involved in the biosynthesis of rubber, an isoprenoid polymer (cis-1,4-polyisoprene). This is Small rubber particle protein from Hevea brasiliensis (Para rubber tree).